A 267-amino-acid chain; its full sequence is 3-methyl-2-oxobutanoate hydroxymethyltransferase (267 aa).

Mg(2+) is bound by residues Asp-45 and Asp-84. 3-methyl-2-oxobutanoate-binding positions include 45 to 46 (DS), Asp-84, and Lys-113. Glu-115 is a binding site for Mg(2+). The Proton acceptor role is filled by Glu-182.

This sequence belongs to the PanB family. As to quaternary structure, homodecamer; pentamer of dimers. Mg(2+) serves as cofactor.

The protein resides in the cytoplasm. It carries out the reaction 3-methyl-2-oxobutanoate + (6R)-5,10-methylene-5,6,7,8-tetrahydrofolate + H2O = 2-dehydropantoate + (6S)-5,6,7,8-tetrahydrofolate. It functions in the pathway cofactor biosynthesis; coenzyme A biosynthesis. In terms of biological role, catalyzes the reversible reaction in which hydroxymethyl group from 5,10-methylenetetrahydrofolate is transferred onto alpha-ketoisovalerate to form ketopantoate. This Saccharolobus islandicus (strain M.16.27) (Sulfolobus islandicus) protein is 3-methyl-2-oxobutanoate hydroxymethyltransferase.